The chain runs to 428 residues: Putative zinc metalloprotease LL2128 (428 aa).

His-19 contacts Zn(2+). Glu-20 is a catalytic residue. Residue His-23 coordinates Zn(2+). The next 3 helical transmembrane spans lie at 188–210 (GPLN…QGGV), 354–376 (IVYL…IPVL), and 401–423 (IITM…NDIL). A PDZ domain is found at 188 to 282 (GPLNNFILGI…SETLSVTPKK (95 aa)).

Belongs to the peptidase M50B family. The cofactor is Zn(2+).

The protein resides in the cell membrane. The chain is Putative zinc metalloprotease LL2128 from Lactococcus lactis subsp. lactis (strain IL1403) (Streptococcus lactis).